Here is a 469-residue protein sequence, read N- to C-terminus: Septin homolog spn1 (469 aa).

The segment at 1–58 (MASMVLADGMPTVKDDSTRSRGSDVDSFTSTDNVTQINVEAAISENKNEEKPIQDNSE) is disordered. The segment covering 13–24 (VKDDSTRSRGSD) has biased composition (basic and acidic residues). Residues 26-38 (DSFTSTDNVTQIN) show a composition bias toward polar residues. One can recognise a Septin-type G domain in the interval 92–367 (QGFNFNVLVL…EAYRTERLLS (276 aa)). The interval 102-109 (GESGSGKS) is G1 motif. Residues 102–109 (GESGSGKS), Thr-139, Gly-165, 244–252 (KADTLTDDE), and Arg-317 each bind GTP. The G3 motif stretch occupies residues 162–165 (DTPG). Positions 243 to 246 (AKAD) are G4 motif. A coiled-coil region spans residues 383–469 (SAKLEEERAL…NEKSKRKFFK (87 aa)).

Belongs to the TRAFAC class TrmE-Era-EngA-EngB-Septin-like GTPase superfamily. Septin GTPase family. In terms of assembly, component of the septin complex composed of two copies of each spn1, spn2, spn3 and spn4.

The protein localises to the cytoplasm. The protein resides in the cell cortex. Plays a role in the cell cycle. Involved in a late stage of septum formation leading to the separation of the daughter cells. The chain is Septin homolog spn1 (spn1) from Schizosaccharomyces pombe (strain 972 / ATCC 24843) (Fission yeast).